The sequence spans 329 residues: Cysteine synthase (329 aa).

N6-(pyridoxal phosphate)lysine is present on K48. Pyridoxal 5'-phosphate is bound by residues N78, 183–187 (GTGGT), and S278.

This sequence belongs to the cysteine synthase/cystathionine beta-synthase family. As to quaternary structure, homodimer. The cofactor is pyridoxal 5'-phosphate.

The enzyme catalyses O-acetyl-L-serine + hydrogen sulfide = L-cysteine + acetate. It participates in amino-acid biosynthesis; L-cysteine biosynthesis; L-cysteine from L-serine: step 2/2. Functionally, catalyzes the conversion of O-acetylserine (OAS) to cysteine through the elimination of acetate and addition of hydrogen sulfide. The sequence is that of Cysteine synthase (srpG) from Synechococcus elongatus (strain ATCC 33912 / PCC 7942 / FACHB-805) (Anacystis nidulans R2).